A 211-amino-acid chain; its full sequence is Urease accessory protein UreG (211 aa).

Residue 11–18 (GPVGSGKT) participates in GTP binding.

This sequence belongs to the SIMIBI class G3E GTPase family. UreG subfamily. Homodimer. UreD, UreF and UreG form a complex that acts as a GTP-hydrolysis-dependent molecular chaperone, activating the urease apoprotein by helping to assemble the nickel containing metallocenter of UreC. The UreE protein probably delivers the nickel.

It is found in the cytoplasm. Its function is as follows. Facilitates the functional incorporation of the urease nickel metallocenter. This process requires GTP hydrolysis, probably effectuated by UreG. The polypeptide is Urease accessory protein UreG (Laribacter hongkongensis (strain HLHK9)).